Consider the following 419-residue polypeptide: Carboxypeptidase A1 (419 aa).

Residues 1–16 (MRGLLVLSVLLGAVFG) form the signal peptide. Residues 17–110 (KEDFVGHQVL…QEQMFAFRSR (94 aa)) constitute a propeptide, activation peptide. A Peptidase M14 domain is found at 121 to 414 (TYHTLEEIYD…LALLTIMEHT (294 aa)). Zn(2+) is bound by residues H179 and E182. Substrate contacts are provided by residues 179–182 (HSRE), R237, and 254–255 (NR). Residues C248 and C271 are joined by a disulfide bond. H306 is a Zn(2+) binding site. Residues 307–308 (SY) and Y358 contribute to the substrate site. The active-site Proton donor/acceptor is the E380.

This sequence belongs to the peptidase M14 family. In terms of assembly, monomer. May form a complex with proelastase 2. Zn(2+) serves as cofactor.

The protein resides in the secreted. It catalyses the reaction Release of a C-terminal amino acid, but little or no action with -Asp, -Glu, -Arg, -Lys or -Pro.. The catalysed reaction is leukotriene C4 + H2O = leukotriene F4 + glycine. Inhibited by interaction with the S.magnifica carboxypeptidase inhibitor SmCI. Its function is as follows. Carboxypeptidase that catalyzes the release of a C-terminal amino acid, but has little or no action with -Asp, -Glu, -Arg, -Lys or -Pro. Catalyzes the conversion of leukotriene C4 to leukotriene F4 via the hydrolysis of an amide bond. The protein is Carboxypeptidase A1 of Homo sapiens (Human).